The primary structure comprises 1071 residues: SLIT-ROBO Rho GTPase-activating protein 2 (1071 aa).

In terms of domain architecture, F-BAR spans 22-325 (KEIRAQLTEQ…AVENLDATSD (304 aa)). Basic and acidic residues predominate over residues 181–203 (LKEAEKQEEKQIGKSVKQEDRQT). The interval 181–211 (LKEAEKQEEKQIGKSVKQEDRQTPRSPDSTA) is disordered. Residue Ser206 is modified to Phosphoserine. Residues 363 to 401 (QSELVQRCQQLQSRLSTLKIENEEVKKTMEATLQTIQDI) are a coiled coil. A phosphoserine mark is found at Ser427, Ser500, Ser691, and Ser695. Residues 489-679 (ARRSSTVRKQ…TIIIQHENIF (191 aa)) form the Rho-GAP domain. Positions 700-726 (CDSTHGETTSAEDSTQDVTAEHHTSDD) are disordered. The segment covering 705–717 (GETTSAEDSTQDV) has biased composition (polar residues). The residue at position 724 (Ser724) is a Phosphoserine. An SH3 domain is found at 728–787 (CEPIEAIAKFDYVGRTARELSFKKGASLLLYQRASDDWWEGRHNGIDGLIPHQYIVVQDT). Residue Ser795 is modified to Phosphoserine. Disordered stretches follow at residues 795–819 (SSPK…TGAS) and 838–918 (RKRP…DSPQ). The span at 855-868 (HGLGSSLTDSSSLG) shows a compositional bias: low complexity. Polar residues-rich tracts occupy residues 874–885 (RPSSQPIMSQNL) and 897–907 (GHGSLNSISRH). Ser916 is subject to Phosphoserine. Arg927 carries the post-translational modification Symmetric dimethylarginine; by PRMT5. Residue Ser930 is modified to Phosphoserine. The stretch at 940-968 (EVIAQDIEATMNSALNELQELERQSSAKH) forms a coiled coil. Residues 984 to 1012 (PVVAPTSEPSSPLHTQLLKDPEPAFQRSA) form a disordered region. Ser990, Ser994, Ser1013, and Ser1027 each carry phosphoserine. The interval 1029-1071 (KMAAPVKPPATRPKPTVFPKTNATSPGVNSSASPQATDKSCTV) is disordered. The segment covering 1047–1071 (PKTNATSPGVNSSASPQATDKSCTV) has biased composition (polar residues).

In terms of assembly, homodimer. Forms a heterooligomer with SRGAP1 and SRGAP3 through its F-BAR domain. Interacts (via SH3 domain) with GPHN. Interacts (via SH3 domain) with FMNL1 (activated by RAC1); regulates the actin filament severing activity of FMNL1 and actin dynamics. Interacts (via SH3 domain) with FMNL3. Interacts with RAC1; specifically stimulates RAC1 GTPase activity. Interacts (via F-BAR domain) with HOMER1. Interacts with ROBO1 and ROBO2. Interacts with FASLG. Interacts with PRMT5. Methylation at Arg-927 is required for the stimulation of cell migration, dimerization and localization at the plasma membrane protrusions.

The protein resides in the cell membrane. Its subcellular location is the cell projection. The protein localises to the dendritic spine. It localises to the postsynaptic density. It is found in the postsynaptic cell membrane. The protein resides in the lamellipodium. Its subcellular location is the cytoplasmic vesicle. The protein localises to the phagosome. It localises to the nucleus. It is found in the cytoplasm. The protein resides in the cytosol. In terms of biological role, postsynaptic RAC1 GTPase activating protein (GAP) that plays a key role in neuronal morphogenesis and migration mainly during development of the cerebral cortex. Regulates excitatory and inhibitory synapse maturation and density in cortical pyramidal neurons. SRGAP2/SRGAP2A limits excitatory and inhibitory synapse density through its RAC1-specific GTPase activating activity, while it promotes maturation of both excitatory and inhibitory synapses through its ability to bind to the postsynaptic scaffolding protein HOMER1 at excitatory synapses, and the postsynaptic protein GPHN at inhibitory synapses. Mechanistically, acts by binding and deforming membranes, thereby regulating actin dynamics to regulate cell migration and differentiation. Promotes cell repulsion and contact inhibition of locomotion: localizes to protrusions with curved edges and controls the duration of RAC1 activity in contact protrusions. In non-neuronal cells, may also play a role in cell migration by regulating the formation of lamellipodia and filopodia. This chain is SLIT-ROBO Rho GTPase-activating protein 2, found in Mus musculus (Mouse).